Reading from the N-terminus, the 120-residue chain is MQVKANDTTTARGREAEDRAARHLERGGLRVVERNFRIRGGEIDLICRDGKGLVFVEVRQRSRSDFGGAGASITAGKRRRIVLAAQHYLLGKPDCDCRFDCVLIDGEQLEWIKHAFSADD.

The segment at 1 to 20 (MQVKANDTTTARGREAEDRA) is disordered.

Belongs to the UPF0102 family.

The protein is UPF0102 protein Daro_0503 of Dechloromonas aromatica (strain RCB).